We begin with the raw amino-acid sequence, 755 residues long: Serine/threonine-protein kinase GL21140 (755 aa).

Low complexity predominate over residues 18–52 (QASASGSGTPKKTAASSAAAQNSKQLLDQLSQQQK). The segment at 18–128 (QASASGSGTP…GSANTNGSAS (111 aa)) is disordered. Basic and acidic residues-rich tracts occupy residues 53-66 (AQEEAETHSRRDCD) and 74-84 (EPEKDLDELRD). The span at 87–99 (GSLTGSGSVGKSN) shows a compositional bias: polar residues. Positions 100-128 (GSLSGASSTTSAPAGTSTPGSANTNGSAS) are enriched in low complexity. 2 Doublecortin domains span residues 157–243 (HRIK…VDYN) and 314–397 (RIVT…VDDF). Residues 484 to 742 (YTLSQIIGDG…SEDILDHYWT (259 aa)) enclose the Protein kinase domain. ATP is bound by residues 490 to 498 (IGDGNFAIV) and Lys-513. Asp-605 acts as the Proton acceptor in catalysis.

The protein belongs to the protein kinase superfamily. CAMK Ser/Thr protein kinase family. CaMK subfamily.

The catalysed reaction is L-seryl-[protein] + ATP = O-phospho-L-seryl-[protein] + ADP + H(+). It carries out the reaction L-threonyl-[protein] + ATP = O-phospho-L-threonyl-[protein] + ADP + H(+). The protein is Serine/threonine-protein kinase GL21140 of Drosophila persimilis (Fruit fly).